We begin with the raw amino-acid sequence, 298 residues long: Oxygen-dependent coproporphyrinogen-III oxidase (298 aa).

Ser92 contributes to the substrate binding site. Residues His96 and His106 each contribute to the a divalent metal cation site. The active-site Proton donor is His106. Residue 108–110 participates in substrate binding; the sequence is NVR. The a divalent metal cation site is built by His145 and His175. The segment at 239-274 is important for dimerization; that stretch reads YVEFNLVYDRGTLFGLQSGGRSESILMSLPPRVRWE. Substrate is bound at residue 257 to 259; sequence GGR.

This sequence belongs to the aerobic coproporphyrinogen-III oxidase family. In terms of assembly, homodimer. Requires a divalent metal cation as cofactor.

It localises to the cytoplasm. The enzyme catalyses coproporphyrinogen III + O2 + 2 H(+) = protoporphyrinogen IX + 2 CO2 + 2 H2O. It functions in the pathway porphyrin-containing compound metabolism; protoporphyrin-IX biosynthesis; protoporphyrinogen-IX from coproporphyrinogen-III (O2 route): step 1/1. Its function is as follows. Involved in the heme biosynthesis. Catalyzes the aerobic oxidative decarboxylation of propionate groups of rings A and B of coproporphyrinogen-III to yield the vinyl groups in protoporphyrinogen-IX. The chain is Oxygen-dependent coproporphyrinogen-III oxidase from Stenotrophomonas maltophilia (strain R551-3).